The sequence spans 416 residues: Serine hydroxymethyltransferase (416 aa).

(6S)-5,6,7,8-tetrahydrofolate is bound by residues L121 and 125–127; that span reads GHL. K229 carries the post-translational modification N6-(pyridoxal phosphate)lysine.

It belongs to the SHMT family. As to quaternary structure, homodimer. It depends on pyridoxal 5'-phosphate as a cofactor.

It localises to the cytoplasm. It carries out the reaction (6R)-5,10-methylene-5,6,7,8-tetrahydrofolate + glycine + H2O = (6S)-5,6,7,8-tetrahydrofolate + L-serine. It functions in the pathway one-carbon metabolism; tetrahydrofolate interconversion. The protein operates within amino-acid biosynthesis; glycine biosynthesis; glycine from L-serine: step 1/1. Functionally, catalyzes the reversible interconversion of serine and glycine with tetrahydrofolate (THF) serving as the one-carbon carrier. This reaction serves as the major source of one-carbon groups required for the biosynthesis of purines, thymidylate, methionine, and other important biomolecules. Also exhibits THF-independent aldolase activity toward beta-hydroxyamino acids, producing glycine and aldehydes, via a retro-aldol mechanism. This chain is Serine hydroxymethyltransferase, found in Neisseria meningitidis serogroup A / serotype 4A (strain DSM 15465 / Z2491).